Consider the following 107-residue polypeptide: Translation initiation factor IF-1, chloroplastic (107 aa).

The S1-like domain maps to 8 to 83; that stretch reads REKKNPREAK…SKGRIIYRLP (76 aa). The disordered stretch occupies residues 81 to 107; sequence RLPHKDSKRTEDSKDTEDLKDTKDSKG. Positions 83-107 are enriched in basic and acidic residues; the sequence is PHKDSKRTEDSKDTEDLKDTKDSKG.

It belongs to the IF-1 family. In terms of assembly, component of the 30S ribosomal translation pre-initiation complex which assembles on the 30S ribosome in the order IF-2 and IF-3, IF-1 and N-formylmethionyl-tRNA(fMet); mRNA recruitment can occur at any time during PIC assembly.

Its subcellular location is the plastid. It localises to the chloroplast. One of the essential components for the initiation of protein synthesis. Stabilizes the binding of IF-2 and IF-3 on the 30S subunit to which N-formylmethionyl-tRNA(fMet) subsequently binds. Helps modulate mRNA selection, yielding the 30S pre-initiation complex (PIC). Upon addition of the 50S ribosomal subunit IF-1, IF-2 and IF-3 are released leaving the mature 70S translation initiation complex. In Oryza sativa subsp. indica (Rice), this protein is Translation initiation factor IF-1, chloroplastic.